Consider the following 461-residue polypeptide: MPREIITIQAGQCGNSIGSQFWQQLCLEHGISQDGTIEDFATEGGDRKDVFFYQSDDTRYIPRSILIDLEPRVINTIQTGPYRNIYNPENFYVGKSGLGAGNNWGDGYQTGEQVHEEIMEMIEREADGSDSLEGFMMLHSIAGGTGSGLGSFLLERLNDRFPKKIIQTYSVFPDTTSAGDVVVHPYNSLLAMRRLTQNADSVVVLDNGALSHIAADRLHVQEPSFQQTNQLVSTVMSASTTTLRYPGYMHNDLVSILASLIPTPRCHFLMTSYTPFTGDQVEQAKTVRKTTVLDVMRRLLQPKNRMVSTVPGKKSCYISILNVIQGDVDPTDVHKSLLRIRERRLATFIPWGPASIQVALTKRSPYVTMAHRVSGLMLANHTSIATLFKRIVRQYDGMRKRNAFMEAYKKTAPFSENLNEFDEAREVVMDLIADYEAAEDANYLNPELGENASADTDKRMA.

142-148 is a GTP binding site; sequence AGGTGSG.

This sequence belongs to the tubulin family.

It localises to the cytoplasm. The protein localises to the cytoskeleton. Its subcellular location is the microtubule organizing center. It is found in the spindle pole body. In terms of biological role, tubulin is the major constituent of microtubules. The gamma chain is found at microtubule organizing centers (MTOC) such as the spindle poles or the centrosome, suggesting that it is involved in the minus-end nucleation of microtubule assembly. The sequence is that of Tubulin gamma chain (tbg) from Neurospora crassa (strain ATCC 24698 / 74-OR23-1A / CBS 708.71 / DSM 1257 / FGSC 987).